The chain runs to 332 residues: MKNLRNRNFLTLLDFTQKEMEFLLNLSEDLKRAKYAGIEQQKMKGKNIALLFEKDSTRTRCAFETAAYDQGAHVTYLGPTGSQMGKKESTKDTARVLGGMYDGIEYRGFSQRVVEDLAKYSGVPVWNGLTDEDHPTQVLADFLTAKEVLKKPYNEINFTYVGDGRNNVANALMQGAAIMGMTFHLVCPKELNPTDELLNRCNDIADKNGGEILITDDIDEGVKGSDVIYTDVWVSMGEPDEVWEKRIKLLEPYRVTKELMKKTGNPHTIFEHCLPSFHDTETIIGKQIQEKYGLTEMEVTNEVFESEQSVVFQEAENRAHTIKAVMVATLGE.

Carbamoyl phosphate is bound by residues 56–59 (STRT), Gln83, Arg107, and 134–137 (HPTQ). L-ornithine is bound by residues Asn167, Asp231, and 235 to 236 (SM). Carbamoyl phosphate-binding positions include 273–274 (CL) and Arg318.

The protein belongs to the aspartate/ornithine carbamoyltransferase superfamily. OTCase family.

The protein resides in the cytoplasm. It catalyses the reaction carbamoyl phosphate + L-ornithine = L-citrulline + phosphate + H(+). Its pathway is amino-acid degradation; L-arginine degradation via ADI pathway; carbamoyl phosphate from L-arginine: step 2/2. Reversibly catalyzes the transfer of the carbamoyl group from carbamoyl phosphate (CP) to the N(epsilon) atom of ornithine (ORN) to produce L-citrulline. The sequence is that of Ornithine carbamoyltransferase 1, catabolic (arcB1) from Staphylococcus epidermidis (strain ATCC 12228 / FDA PCI 1200).